Consider the following 263-residue polypeptide: MSSYHLSTRERLLAIINDIEIVAKELIENTIAPKAQKMSSTDHAQLVELLVLKDKELKATLQLAAEQAGIEKNMDALREQVRKQDEEINQLQRQLKEAEQILATSIFQARQKLASIAKANKRPVSSEELIKFAHRISASHAICAPLTWQQGDLRRPYPTDIEMRLGFLGKSDLNINGHNLQHPNSLNEMHRNASTVGAGGAGGDIPASAPNQFAWHPSGELHMSMGAGAGSVSLDTRAHKDASQDDVEVMSTESSSSSSSDSQ.

Residues 61–111 (LQLAAEQAGIEKNMDALREQVRKQDEEINQLQRQLKEAEQILATSIFQARQ) adopt a coiled-coil conformation. 2 disordered regions span residues 209–228 (APNQ…MGAG) and 235–263 (DTRA…SDSQ). A compositionally biased stretch (low complexity) spans 251–263 (STESSSSSSSDSQ).

The protein belongs to the Mediator complex subunit 4 family. Component of the Mediator complex.

It localises to the nucleus. Its function is as follows. Component of the Mediator complex, a coactivator involved in the regulated transcription of nearly all RNA polymerase II-dependent genes. Mediator functions as a bridge to convey information from gene-specific regulatory proteins to the basal RNA polymerase II transcription machinery. Mediator is recruited to promoters by direct interactions with regulatory proteins and serves as a scaffold for the assembly of a functional preinitiation complex with RNA polymerase II and the general transcription factors. The protein is Mediator of RNA polymerase II transcription subunit 4 (MED4) of Anopheles gambiae (African malaria mosquito).